A 207-amino-acid chain; its full sequence is Putative 3-methyladenine DNA glycosylase (207 aa).

It belongs to the DNA glycosylase MPG family.

The sequence is that of Putative 3-methyladenine DNA glycosylase from Burkholderia orbicola (strain MC0-3).